Here is a 178-residue protein sequence, read N- to C-terminus: Female-specific protein transformer (178 aa).

Basic and acidic residues-rich tracts occupy residues 1–18 and 25–40; these read MKMD…DSHG and RERE…DSKK. Residues 1–117 are disordered; it reads MKMDADSSCG…RRYNPPPKII (117 aa). Composition is skewed to basic residues over residues 59-73 and 81-108; these read RRLR…RRSA and RRHR…RSPR.

The protein resides in the nucleus speckle. Functionally, member of the regulatory pathway controlling female somatic sexual differentiation, regulated by Sxl. Activates dsx female-specific splicing by promoting the formation of a splicing enhancer complex which consists of tra, tra2 and sr proteins. The sequence is that of Female-specific protein transformer (tra) from Drosophila erecta (Fruit fly).